Consider the following 205-residue polypeptide: Pyridoxine/pyridoxamine 5'-phosphate oxidase (205 aa).

FMN contacts are provided by residues 53–58 (RMVLLK), 68–69 (YT), Lys75, and Gln97. Lys58 provides a ligand contact to substrate. The substrate site is built by Tyr115, Arg119, and Ser123. Residues 132-133 (QS) and Trp177 each bind FMN. A substrate-binding site is contributed by 183–185 (RLH). Arg187 is an FMN binding site.

This sequence belongs to the pyridoxamine 5'-phosphate oxidase family. Homodimer. Requires FMN as cofactor.

The enzyme catalyses pyridoxamine 5'-phosphate + O2 + H2O = pyridoxal 5'-phosphate + H2O2 + NH4(+). It carries out the reaction pyridoxine 5'-phosphate + O2 = pyridoxal 5'-phosphate + H2O2. It functions in the pathway cofactor metabolism; pyridoxal 5'-phosphate salvage; pyridoxal 5'-phosphate from pyridoxamine 5'-phosphate: step 1/1. It participates in cofactor metabolism; pyridoxal 5'-phosphate salvage; pyridoxal 5'-phosphate from pyridoxine 5'-phosphate: step 1/1. In terms of biological role, catalyzes the oxidation of either pyridoxine 5'-phosphate (PNP) or pyridoxamine 5'-phosphate (PMP) into pyridoxal 5'-phosphate (PLP). This Mesorhizobium japonicum (strain LMG 29417 / CECT 9101 / MAFF 303099) (Mesorhizobium loti (strain MAFF 303099)) protein is Pyridoxine/pyridoxamine 5'-phosphate oxidase.